The primary structure comprises 131 residues: ATP synthase epsilon chain, chloroplastic (131 aa).

This sequence belongs to the ATPase epsilon chain family. As to quaternary structure, F-type ATPases have 2 components, CF(1) - the catalytic core - and CF(0) - the membrane proton channel. CF(1) has five subunits: alpha(3), beta(3), gamma(1), delta(1), epsilon(1). CF(0) has three main subunits: a, b and c.

The protein localises to the plastid. It localises to the chloroplast thylakoid membrane. Its function is as follows. Produces ATP from ADP in the presence of a proton gradient across the membrane. This is ATP synthase epsilon chain, chloroplastic from Cyanidioschyzon merolae (strain NIES-3377 / 10D) (Unicellular red alga).